The chain runs to 154 residues: uncharacterized protein (154 aa).

Positions 1-37 (MDNLKEKPLSYNINNNNLNNNNNNNNNNNNNNNNINN) are disordered. Low complexity predominate over residues 12–37 (NINNNNLNNNNNNNNNNNNNNNNINN). N82 is a glycosylation site (N-linked (GlcNAc...) asparagine). The helical transmembrane segment at 116-136 (IIITTIVVLLMIAVSLGLILA) threads the bilayer. Residue N149 is glycosylated (N-linked (GlcNAc...) asparagine).

It is found in the membrane. This is an uncharacterized protein from Dictyostelium discoideum (Social amoeba).